Here is a 567-residue protein sequence, read N- to C-terminus: tRNA(His) guanylyltransferase 1 (567 aa).

The Mg(2+) site is built by Asp-342, Gly-343, and Asp-389. GTP contacts are provided by residues 342 to 347 (DGCHFH) and 388 to 389 (SD). Glycyl lysine isopeptide (Lys-Gly) (interchain with G-Cter in ubiquitin) cross-links involve residues Lys-397 and Lys-403.

It belongs to the tRNA(His) guanylyltransferase family. Requires Mg(2+) as cofactor.

It localises to the nucleus. The protein resides in the nucleoplasm. The catalysed reaction is a 5'-end ribonucleotide-tRNA(His) + GTP + ATP + H2O = a 5'-end phospho-guanosine-ribonucleotide-tRNA(His) + AMP + 2 diphosphate + H(+). Adds a GMP to the 5'-end of tRNA(His) after transcription and RNase P cleavage. This Arabidopsis thaliana (Mouse-ear cress) protein is tRNA(His) guanylyltransferase 1 (THG1).